The primary structure comprises 548 residues: Natural resistance-associated macrophage protein 1 (548 aa).

Residues 1–38 (MPGDMGPPKQGGTRYGSISSPPSPGPQQAPPGGTYLSE) are disordered. Topologically, residues 1-55 (MPGDMGPPKQGGTRYGSISSPPSPGPQQAPPGGTYLSEKIPIPDTESGAFSLRKL) are cytoplasmic. Residues 56 to 73 (WAFTGPGFLMSIAFLDPG) form a helical membrane-spanning segment. At 74 to 82 (NIESDLQAG) the chain is on the extracellular side. Residues 83–102 (AVAGFKLLWVLLWATVLGLL) form a helical membrane-spanning segment. Residues 103-139 (CQRLAARLGVVTGKDLGEVCHLYYPKVPRILLWLTIE) lie on the Cytoplasmic side of the membrane. The helical transmembrane segment at 140-160 (LAIVGSDMQEVIGTAIAFSLL) threads the bilayer. The Extracellular portion of the chain corresponds to 161 to 164 (SAGR). Residues 165–184 (IPLWGGVLITIVDTFFFLFL) traverse the membrane as a helical segment. The Cytoplasmic portion of the chain corresponds to 185–193 (DNYGLRKLE). Residues 194-214 (AFFGFLITIMALTFGYEYVVA) form a helical membrane-spanning segment. The Extracellular portion of the chain corresponds to 215-237 (RPAQGALLQGLFLPSCAGCGQPE). The helical transmembrane segment at 238 to 256 (LLQAVGIVGAIIMPHNIYL) threads the bilayer. Residues 257-284 (HSSLVKSREVDRSRRADIREANMYFLIE) lie on the Cytoplasmic side of the membrane. Residues 285-304 (ATIALSVSFLINLFVMAVFG) form a helical membrane-spanning segment. Over 305-346 (QAFYKQTNQAAFNICANSSLHDYATIFPRNNLTVAVDIYQGG) the chain is Extracellular. Asn321 and Asn335 each carry an N-linked (GlcNAc...) asparagine glycan. The helical transmembrane segment at 347–366 (VILGCLFGPAALYIWAVGLL) threads the bilayer. Residues 367–397 (AAGQSSTMTGTYAGQFVMEGFLKLRWSRFAR) lie on the Cytoplasmic side of the membrane. A helical transmembrane segment spans residues 398–415 (VLLTRSCAILPTVLVAVF). Topologically, residues 416–426 (RDLRDLSGLND) are extracellular. A helical membrane pass occupies residues 427–447 (LLNVLQSLLLPFAVLPILTFT). At 448–463 (SMPAVMQEFANGLVSK) the chain is on the cytoplasmic side. A helical transmembrane segment spans residues 464-485 (VISSSIMVLVCAVNLYFVISYV). Residues 486–493 (PSLPHPDY) are Extracellular-facing. The chain crosses the membrane as a helical span at residues 494 to 513 (FSLVALLAAAYLGLTTYLVW). At 514–548 (TCLITQGATLLAHSSHQRFLYGLPEEDQENGRTSG) the chain is on the cytoplasmic side.

This sequence belongs to the NRAMP family.

It is found in the late endosome membrane. It localises to the lysosome membrane. The enzyme catalyses Zn(2+)(in) + H(+)(out) = Zn(2+)(out) + H(+)(in). It carries out the reaction Fe(2+)(in) + H(+)(out) = Fe(2+)(out) + H(+)(in). It catalyses the reaction Mn(2+)(in) + H(+)(out) = Mn(2+)(out) + H(+)(in). Macrophage-specific antiporter that fluxes metal ions in either direction against a proton gradient. Localized to late endosomal lysosomal membranes, delivers bivalent cations from the cytosol into these acidic compartments where they may directly affect antimicrobial activity. Involved in iron metabolism and host natural resistance to infection with intracellular parasites. Pathogen resistance involves sequestration of Fe(2+) and Mn(2+), cofactors of both prokaryotic and eukaryotic catalases and superoxide dismutases, not only to protect the macrophage against its own generation of reactive oxygen species, but to deny the cations to the pathogen for synthesis of its protective enzymes. This is Natural resistance-associated macrophage protein 1 (SLC11A1) from Cervus elaphus (Red deer).